The chain runs to 205 residues: UPF0301 protein AZC_0488 (205 aa).

Belongs to the UPF0301 (AlgH) family.

This Azorhizobium caulinodans (strain ATCC 43989 / DSM 5975 / JCM 20966 / LMG 6465 / NBRC 14845 / NCIMB 13405 / ORS 571) protein is UPF0301 protein AZC_0488.